The chain runs to 396 residues: Inositol-tetrakisphosphate 1-kinase (396 aa).

Lysine 18 contacts 1D-myo-inositol 1,3,4-trisphosphate. ATP contacts are provided by arginine 106 and lysine 157. Residues 117–325 (ETYMQDERIC…ITTILQRPDQ (209 aa)) form the ATP-grasp domain. 2 residues coordinate 1D-myo-inositol 1,3,4-trisphosphate: histidine 167 and lysine 199. ATP is bound by residues 188–199 (QSFISHNAVLYK), serine 214, serine 232, and serine 236. Residues aspartate 281, aspartate 295, and asparagine 297 each coordinate Mg(2+). Residue asparagine 297 coordinates 1D-myo-inositol 1,3,4-trisphosphate.

The protein belongs to the ITPK1 family. As to quaternary structure, monomer. Requires Mg(2+) as cofactor.

The enzyme catalyses 1D-myo-inositol 3,4,5,6-tetrakisphosphate + ATP = 1D-myo-inositol 1,3,4,5,6-pentakisphosphate + ADP + H(+). The catalysed reaction is 1D-myo-inositol 1,3,4-trisphosphate + ATP = 1D-myo-inositol 1,3,4,5-tetrakisphosphate + ADP + H(+). It carries out the reaction 1D-myo-inositol 1,3,4-trisphosphate + ATP = 1D-myo-inositol 1,3,4,6-tetrakisphosphate + ADP + H(+). It catalyses the reaction 1D-myo-inositol 3,4,6-trisphosphate + ATP = 1D-myo-inositol 1,3,4,6-tetrakisphosphate + ADP + H(+). The enzyme catalyses 1D-myo-inositol 1,3,4-trisphosphate + 1D-myo-inositol 1,3,4,5,6-pentakisphosphate = 1D-myo-inositol 3,4,5,6-tetrakisphosphate + 1D-myo-inositol 1,3,4,6-tetrakisphosphate. The catalysed reaction is 1D-myo-inositol 1,3,4-trisphosphate + 1D-myo-inositol 1,3,4,5,6-pentakisphosphate = 1D-myo-inositol 3,4,5,6-tetrakisphosphate + 1D-myo-inositol 1,3,4,5-tetrakisphosphate. In terms of biological role, kinase that can phosphorylate various inositol polyphosphate such as Ins(3,4,5,6)P4 or Ins(1,3,4)P3. Phosphorylates Ins(3,4,5,6)P4 at position 1 to form Ins(1,3,4,5,6)P5. This reaction is thought to have regulatory importance, since Ins(3,4,5,6)P4 is an inhibitor of plasma membrane Ca(2+)-activated Cl(-) channels, while Ins(1,3,4,5,6)P5 is not. Also phosphorylates Ins(1,3,4)P3 on O-5 and O-6 to form Ins(1,3,4,6)P4, an essential molecule in the hexakisphosphate (InsP6) pathway. Also acts as an inositol polyphosphate phosphatase that dephosphorylates Ins(1,3,4,5)P4 and Ins(1,3,4,6)P4 to Ins(1,3,4)P3, and Ins(1,3,4,5,6)P5 to Ins(3,4,5,6)P4. May also act as an isomerase that interconverts the inositol tetrakisphosphate isomers Ins(1,3,4,5)P4 and Ins(1,3,4,6)P4 in the presence of ADP and magnesium. Probably acts as the rate-limiting enzyme of the InsP6 pathway. Modifies TNF-alpha-induced apoptosis by interfering with the activation of TNFRSF1A-associated death domain. Plays an important role in MLKL-mediated necroptosis. Produces highly phosphorylated inositol phosphates such as inositolhexakisphosphate (InsP6) which bind to MLKL mediating the release of an N-terminal auto-inhibitory region leading to its activation. Essential for activated phospho-MLKL to oligomerize and localize to the cell membrane during necroptosis. The protein is Inositol-tetrakisphosphate 1-kinase (itpk1) of Xenopus laevis (African clawed frog).